We begin with the raw amino-acid sequence, 372 residues long: Y-box-binding protein 3 (372 aa).

The tract at residues 1-82 (MSEAGEATTT…LATAAGSEDA (82 aa)) is disordered. Residue Ser-2 is modified to N-acetylserine. Ser-2 carries the phosphoserine modification. The segment covering 7 to 28 (ATTTTTTTLPQAPTEAAAAAPQ) has biased composition (low complexity). The residue at position 34 (Ser-34) is a Phosphoserine. The span at 35–79 (PVGSGAPQAAAPAPAAHVAGNPGGDAAPAATGTAAAASLATAAGS) shows a compositional bias: low complexity. The CSD domain maps to 93 to 157 (GTVKWFNVRN…GEKGAEAANV (65 aa)). Residues Ser-134, Ser-201, Ser-203, and Ser-204 each carry the phosphoserine modification. The disordered stretch occupies residues 181-372 (YYGRRRGPPR…APPTQQSSAE (192 aa)). The segment covering 222 to 238 (QLRRPQYRPQYRQRRFP) has biased composition (basic residues). An Omega-N-methylarginine modification is found at Arg-251. Residues 314–324 (QQATSGPNQPS) show a composition bias toward polar residues. A Phosphoserine modification is found at Ser-324. Omega-N-methylarginine is present on Arg-326. A compositionally biased stretch (basic residues) spans 327-340 (RGYRRPYNYRRRPR). 3 positions are modified to phosphoserine: Ser-346, Ser-369, and Ser-370.

In terms of assembly, found in a mRNP complex with YBX2. Interacts with RRP1B. As to expression, highly expressed in skeletal muscle and heart.

Its subcellular location is the cytoplasm. It is found in the nucleus. Its function is as follows. Binds to the GM-CSF promoter. Seems to act as a repressor. Also binds to full-length mRNA and to short RNA sequences containing the consensus site 5'-UCCAUCA-3'. May have a role in translation repression. This chain is Y-box-binding protein 3 (YBX3), found in Homo sapiens (Human).